Reading from the N-terminus, the 142-residue chain is Alpha-lactalbumin (142 aa).

The signal sequence occupies residues 1–18; it reads MMSFVSLLLVGILFHATQ. One can recognise a C-type lysozyme domain in the interval 20-142; sequence EQLTKCEVFR…KLDQWLCEKL (123 aa). 4 cysteine pairs are disulfide-bonded: Cys-25–Cys-139, Cys-47–Cys-130, Cys-80–Cys-96, and Cys-92–Cys-110. 2 N-linked (GlcNAc...) asparagine glycosylation sites follow: Asn-64 and Asn-93. The Ca(2+) site is built by Lys-98, Asp-101, Asp-103, Asp-106, and Asp-107.

This sequence belongs to the glycosyl hydrolase 22 family. Lactose synthase (LS) is a heterodimer of a catalytic component, beta1,4-galactosyltransferase (beta4Gal-T1) and a regulatory component, alpha-lactalbumin (LA). In terms of tissue distribution, mammary gland specific. Secreted in milk.

The protein localises to the secreted. In terms of biological role, regulatory subunit of lactose synthase, changes the substrate specificity of galactosyltransferase in the mammary gland making glucose a good acceptor substrate for this enzyme. This enables LS to synthesize lactose, the major carbohydrate component of milk. In other tissues, galactosyltransferase transfers galactose onto the N-acetylglucosamine of the oligosaccharide chains in glycoproteins. This is Alpha-lactalbumin (LALBA) from Bubalus bubalis (Domestic water buffalo).